The following is a 113-amino-acid chain: U11-theraphotoxin-Hhn1t (113 aa).

Positions Met-1–Ala-21 are cleaved as a signal peptide. Positions Asp-22–Arg-74 are excised as a propeptide. A compositionally biased stretch (basic and acidic residues) spans Leu-60–Asn-69. Residues Leu-60–Asp-83 are disordered. Intrachain disulfides connect Cys-75/Cys-90, Cys-82/Cys-95, and Cys-89/Cys-110.

This sequence belongs to the neurotoxin 14 (magi-1) family. 01 (HNTX-16) subfamily. In terms of tissue distribution, expressed by the venom gland.

It is found in the secreted. Its function is as follows. Probable ion channel inhibitor. The protein is U11-theraphotoxin-Hhn1t of Cyriopagopus hainanus (Chinese bird spider).